An 829-amino-acid polypeptide reads, in one-letter code: Cap-specific mRNA (nucleoside-2'-O-)-methyltransferase 1 (829 aa).

Positions 1 to 68 (MKRAAQASDE…DSQNSQGSMA (68 aa)) are disordered. A Bipartite nuclear localization signal motif is present at residues 2 to 16 (KRAAQASDEPLKKRK). Low complexity predominate over residues 31-44 (QRTTSQDSSQSESL). Positions 55-68 (SRPSDSQNSQGSMA) are enriched in polar residues. Residues 79–125 (YNNVSQKLMAKMGFREGEGLGKYGQGRKEIVEASTQRGRRGLGLMLK) form the G-patch domain. Substrate-binding positions include 195-199 (KTVFD) and arginine 210. In terms of domain architecture, RrmJ-type SAM-dependent 2'-O-MTase spans 223 to 442 (FFLNRAAMKM…ERYVVCKGLK (220 aa)). Asparagine 226 provides a ligand contact to S-adenosyl-L-methionine. Lysine 231 is an active-site residue. S-adenosyl-L-methionine is bound by residues 269–275 (CAGPGGF) and 327–328 (DI). Aspartate 356 is a catalytic residue. Residue 366 to 368 (NLQ) participates in substrate binding. The active-site Proton acceptor is the lysine 396. Position 431 (asparagine 431) interacts with substrate. The WW domain occupies 745–779 (KTVNDPWTMAFSKSSKRKFFYNKQTKESTYDLPAT).

The protein resides in the nucleus. It carries out the reaction a 5'-end (N(7)-methyl 5'-triphosphoguanosine)-ribonucleoside in mRNA + S-adenosyl-L-methionine = a 5'-end (N(7)-methyl 5'-triphosphoguanosine)-(2'-O-methyl-ribonucleoside) in mRNA + S-adenosyl-L-homocysteine + H(+). Functionally, S-adenosyl-L-methionine-dependent methyltransferase that mediates mRNA cap1 2'-O-ribose methylation to the 5'-cap structure of mRNAs. Methylates the ribose of the first nucleotide of a m(7)GpppG-capped mRNA and small nuclear RNA (snRNA) to produce m(7)GpppRm (cap1). Displays a preference for cap0 transcripts. Cap1 modification is linked to higher levels of translation. May be involved in the interferon response pathway. This Danio rerio (Zebrafish) protein is Cap-specific mRNA (nucleoside-2'-O-)-methyltransferase 1 (cmtr1).